A 1161-amino-acid chain; its full sequence is Cingulin (1161 aa).

Positions 1-403 (MSSLSADRKP…SLIHERFCGV (403 aa)) are head. Disordered regions lie at residues 29-53 (GGFP…SPSK), 79-309 (SYGV…LGRD), 649-678 (QSEL…KRET), 699-721 (SKAI…ESNL), 739-773 (RLHS…AASR), and 1123-1161 (QSRR…TTSC). A ZIM motif is present at residues 51-65 (PSKYGVAVRVQGISG). Composition is skewed to polar residues over residues 84-104 (LKTQ…SPYN) and 117-129 (PQGS…QPSS). The segment covering 189 to 203 (NGIGSSLNGTGLNGS) has biased composition (low complexity). The segment covering 273–305 (EASSTSPTINPYAPNTSATVPKLNSTKPSSTGS) has biased composition (polar residues). Residues 413–1128 (SNMKTELEQA…RKIQQSRRST (716 aa)) adopt a coiled-coil conformation. Low complexity predominate over residues 742-751 (SSVPDSSSSD). The span at 755–773 (EENRSLKTQLEESRRAASR) shows a compositional bias: basic and acidic residues. A tail region spans residues 1122–1161 (QQSRRSTLGSTLSSDEEDNYSDTKSITSILTDSPLQTTSC). A compositionally biased stretch (low complexity) spans 1124 to 1134 (SRRSTLGSTLS). Polar residues predominate over residues 1143-1161 (DTKSITSILTDSPLQTTSC).

It belongs to the cingulin family. As to quaternary structure, homodimer.

It localises to the cell junction. The protein localises to the tight junction. Functionally, probably plays a role in the formation and regulation of the tight junction (TJ) paracellular permeability barrier. Note=Localizes to the apical junction complex composed of tight and adherens junctions. This chain is Cingulin, found in Danio rerio (Zebrafish).